A 726-amino-acid chain; its full sequence is Methyltransferase FGSG_00040 (726 aa).

TPR repeat units lie at residues Ser-187 to Val-220, Gln-224 to Ser-257, and Glu-258 to Asn-291. Residues Ala-336 to Arg-531 form the SET domain. Residue Tyr-530 participates in S-adenosyl-L-methionine binding.

Belongs to the class V-like SAM-binding methyltransferase superfamily.

The protein operates within mycotoxin biosynthesis. In terms of biological role, methyltransferase; part of the gene cluster that mediates the biosynthesis of gramillins A and B, bicyclic lipopeptides that induce cell death in maize leaves but not in wheat leaves. The nonribosomal peptide synthetase GRA1 incorporates respectively a glutamic adic (Glu), a leucine (Leu), a serine (Ser), a hydroxyglutamine (HOGln), a 2-amino decanoic acid, and 2 cysteins (CysB and CysA). The biosynthesis of 2-amino decanoic acid incorporated in gramillins could be initiated by a fatty acid synthase composed of the alpha and beta subunits FGSG_00036 and FGSG_11656. The cytochrome P450 monooxygenase FGSG_15680 could hydroxylate the fatty acid chain. Subsequent oxidation to the ketone by the oxidoreductase FGSG_00048 and transamination by aminotransferase FGSG_00049 could form 2-amino-decanoic acid. On the other hand, FGSG_15680 could also be responsible for the HO-modified glutamine at the gamma-position. Whether hydroxylation occurs on the fully assembled product or on the Gln residue prior to assembly into the gramillins requires further proof. The thioredoxin FGSG_00043 could also be required for the disulfide-bond formation between CysA and CysB. The specific involvement of the remaining proteins from the cluster is more difficult to discern, but could have broader regulatory (FGSG_00040 and FGSG_11657) or enzymatic functions (FGSG_00044 and FGSG_00045). The final C-domain of GRA1 does not possess the expected sequence of a termination CT domain, often implicated in macrocyclization and release of a cyclopeptidein fungal NRPs; and the thioesterase FGSG_00047 may act in concert with the terminal C-domain of GRA1 to catalyze the formation of the macrocyclic anhydride and release of the products. The chain is Methyltransferase FGSG_00040 from Gibberella zeae (strain ATCC MYA-4620 / CBS 123657 / FGSC 9075 / NRRL 31084 / PH-1) (Wheat head blight fungus).